A 218-amino-acid polypeptide reads, in one-letter code: Thiopurine S-methyltransferase (218 aa).

Residues Trp-10, Leu-45, Glu-66, and Arg-123 each coordinate S-adenosyl-L-methionine.

The protein belongs to the class I-like SAM-binding methyltransferase superfamily. TPMT family.

Its subcellular location is the cytoplasm. It catalyses the reaction S-adenosyl-L-methionine + a thiopurine = S-adenosyl-L-homocysteine + a thiopurine S-methylether.. The polypeptide is Thiopurine S-methyltransferase (Shewanella baltica (strain OS155 / ATCC BAA-1091)).